The primary structure comprises 225 residues: Glutathione S-transferase Mu 3 (225 aa).

The GST N-terminal domain occupies S5–G92. Glutathione is bound by residues Y11–W12, W50–K54, and N63–L64. K54 is covalently cross-linked (Glycyl lysine isopeptide (Lys-Gly) (interchain with G-Cter in SUMO2)). A Glycyl lysine isopeptide (Lys-Gly) (interchain with G-Cter in SUMO2) cross-link involves residue K73. Glutathione is bound at residue Q76–S77. The GST C-terminal domain occupies T94–I212. Position 120 (Y120) interacts with substrate.

It belongs to the GST superfamily. Mu family. Homodimer.

It localises to the cytoplasm. It carries out the reaction RX + glutathione = an S-substituted glutathione + a halide anion + H(+). Conjugation of reduced glutathione to a wide number of exogenous and endogenous hydrophobic electrophiles. May govern uptake and detoxification of both endogenous compounds and xenobiotics at the testis and brain blood barriers. The polypeptide is Glutathione S-transferase Mu 3 (GSTM3) (Macaca fuscata fuscata (Japanese macaque)).